Here is a 1488-residue protein sequence, read N- to C-terminus: MIERGKFRSLTLINWNGFFARTFDLDELVTTLSGGNGAGKSTTMAAFVTALIPDLTLLHFRNTTEAGATSGSRDKGLHGKLKAGVCYSMLDTINSRHQRVVVGVRLQQVAGRDRKVDIKPFAIQGLPMSVQPTQLVTETLNERQARVLSLAELKDKLDEMEGVQFKQFNSITDYHSLMFDLGIIARRLRSASDRSKFYRLIEASLYGGISSAITRSLRDYLLPENSGVRKAFQDMEAALRENRLTLEAIRVTQSDRDLFKHLISEATDYVAADYMRHANERRVHLDQALAFRRELYTSRKQLAAEQYKHVDMARELGEHNGAEGSLEADYQAASDHLNLVQTALRQQEKIERYEADLEELQIRLEEQNEVVAEAAEMQDENEARAEAAELEVDELKSQLADYQQALDVQQTRAIQYNQAISALARAKELCHLPDLTPESAAEWLDTFQAKEQEATEKLLSLEQKMSVAQTAHSQFEQAYQLVAAINGPLARSEAWDVARELLRDGVNQRHLAEQVQPLRMRLSELEQRLREQQEAERLLAEFCKRQGKNFDIDELEALHQELEARIASLSDSVSSASEQRMALRQEQEQLQSRIQHLMQRAPVWLAAQNSLNQLSEQCGEEFTSSQEVTEYLQQLLEREREAIVERDEVGARKNAVDEEIERLSQPGGAEDQRLNALAERFGGVLLSEIYDDVSLEDAPYFSALYGPSRHAIVVPDLSQIAEQLEGLTDCPEDLYLIEGDPQSFDDSVFSVDELEKAVVVKIADRQWRYSRFPSLPIFGRAARENRIESLHAEREVLSERFATLSFDVQKTQRLHQAFSRFIGSHLSVAFEDDPEAEIRRLNGRRVELERALATHENDNQQQRLQFEQAKEGVSALNRLLPRLNLLADETLADRVDEIQERLDEAQEAARFVQQYGNQLAKLEPVVSVLQSDPEQFEQLKEDYAWSQQMQRDARQQAFALAEVVERRAHFSYSDSAEMLSGNSDLNEKLRQRLEQAEAERTRAREALRSHAAQLSQYSQVLASLKSSYDTKKELLNDLQRELQDIGVRADSGAEERARQRRDELHAQLSNNRSRRNQLEKALTFCEAEMENLTRKLRKLERDYHEMREQVVTAKAGWCAVMRMVKDNGVERRLHRRELAYLSADELRSMSDKALGALRLAVADNEHLRDVLRLSEDPKRPERKIQFFVAVYQHLRERIRQDIIRTDDPVEAIEQMEIELSRLTEELTSREQKLAISSRSVANIIRKTIQREQNRIRMLNQGLQSVSFGQVNSVRLNVNVRETHATLLDVLSEQQEQHQDLFNSNRLTFSEALAKLYQRLNPQIDMGQRTPQTIGEELLDYRNYLEMEVEVNRGSDGWLRAESGALSTGEAIGTGMSILVMVVQSWEDEARRLRGKDISPCRLLFLDEAARLDARSIATLFELCERLQMQLIIAAPENISPEKGTTYKLVRKVFQNTEHVHVVGLRGFAPQLPETLPGTQTEDTPSEAS.

34–41 (GGNGAGKS) is an ATP binding site. Coiled-coil stretches lie at residues 326 to 418 (LEAD…QYNQ), 444 to 472 (LDTFQAKEQEATEKLLSLEQKMSVAQTAH), and 509 to 602 (RHLA…QRAP). Positions 666–783 (PGGAEDQRLN…SLPIFGRAAR (118 aa)) are flexible hinge. 3 coiled-coil regions span residues 835–923 (EAEI…AKLE), 977–1116 (EMLS…AKAG), and 1209–1265 (VEAI…LQSV).

Belongs to the SMC family. MukB subfamily. In terms of assembly, homodimerization via its hinge domain. Binds to DNA via its C-terminal region. Interacts, and probably forms a ternary complex, with MukE and MukF via its C-terminal region. The complex formation is stimulated by calcium or magnesium. Interacts with tubulin-related protein FtsZ.

The protein localises to the cytoplasm. Its subcellular location is the nucleoid. Its function is as follows. Plays a central role in chromosome condensation, segregation and cell cycle progression. Functions as a homodimer, which is essential for chromosome partition. Involved in negative DNA supercoiling in vivo, and by this means organize and compact chromosomes. May achieve or facilitate chromosome segregation by condensation DNA from both sides of a centrally located replisome during cell division. This is Chromosome partition protein MukB from Salmonella paratyphi B (strain ATCC BAA-1250 / SPB7).